Here is a 591-residue protein sequence, read N- to C-terminus: Probable Xaa-Pro aminopeptidase PEPP (591 aa).

The segment at 31–59 (SIHSPPPSVSAATHGGVKNPSFSQRRTSG) is disordered. Residues Asp-322 and Asp-333 each coordinate Mn(2+). Low complexity predominate over residues 441–450 (GLSRQAISGS). The segment at 441 to 460 (GLSRQAISGSRRLPPPRNMK) is disordered. Mn(2+) contacts are provided by Glu-511 and Glu-552.

This sequence belongs to the peptidase M24B family. Requires Mn(2+) as cofactor.

The enzyme catalyses Release of any N-terminal amino acid, including proline, that is linked to proline, even from a dipeptide or tripeptide.. In terms of biological role, catalyzes the removal of a penultimate prolyl residue from the N-termini of peptides. This Sordaria macrospora (strain ATCC MYA-333 / DSM 997 / K(L3346) / K-hell) protein is Probable Xaa-Pro aminopeptidase PEPP (PEPP).